The following is a 336-amino-acid chain: Cytoskeleton protein RodZ (336 aa).

Over M1–G111 the chain is Cytoplasmic. Residues L19–L71 enclose the HTH cro/C1-type domain. A DNA-binding region (H-T-H motif) is located at residues Q30–E49. The chain crosses the membrane as a helical; Signal-anchor for type II membrane protein span at residues W112–W132. Residues W133–Q336 lie on the Periplasmic side of the membrane. A disordered region spans residues N155–G243. Residues G161 to D175 are compositionally biased toward polar residues. Composition is skewed to low complexity over residues T176–P214 and T221–G243.

The protein belongs to the RodZ family.

It localises to the cell inner membrane. In terms of biological role, cytoskeletal protein that is involved in cell-shape control through regulation of the length of the long axis. The protein is Cytoskeleton protein RodZ of Salmonella newport (strain SL254).